The primary structure comprises 428 residues: Sulfite exporter TauE/SafE family protein 6 (428 aa).

Transmembrane regions (helical) follow at residues 1–21 (MKTL…NANQ), 61–81 (ALVV…ASGI), 82–102 (GDGF…LKAA), 105–125 (FSAF…HFGC), 128–148 (LIDY…VSVG), 149–169 (VICN…VFLM), 245–265 (YWIL…LALS), 294–314 (VMSF…GMII), 332–352 (TSFM…LLGM), 356–376 (EAAY…LVFA), and 388–408 (IIVF…ASFG).

It belongs to the 4-toluene sulfonate uptake permease (TSUP) (TC 2.A.102) family.

The protein localises to the membrane. This Arabidopsis thaliana (Mouse-ear cress) protein is Sulfite exporter TauE/SafE family protein 6.